The following is a 502-amino-acid chain: MLKEFREQRINEIKQISAKGVNPYPYKFEKTHSSQDIKAQFENLNPGEVKEDASVSTAGRIMSLRHHGKSAFFHIKDFFGRIQAYIRQDIVGKDVYEFFKEHIAIGDIVGVKGSVFKSKTGEVTILVKEIELLNKPLRPMPEKWHGIKDKEVLYRQRYVDMIANDETLNRFRIRFEIIKLIREFLNSKGFIEVETPILEYVTGGASARPFITHLNVFDIDMYMRIATELYLKRFIVGGFEKVYELGKNFRNEGLSYKHHPEFTSIEIYQAYADYEDMMNLTEELFVFIVEKLFGTTKVKYQDIEIDFSRPWRRVKMRDFIKEHLGVDILEDTEEKMLEVLKQHDVEVEIKDKGHLIEKLWDLVEDKVVQPTFLLEHPVEISPLAKKHREDPRVTERFELIIYGREMANAFSELNDPVDQYERFLRQAKLREAGDEEAQMMDKDFVRALEYGMPPTGGLGIGIDRLVMLLTNSPTIRDVIAFPLVRPISFEEEEMNLEGGSQE.

2 residues coordinate Mg(2+): glutamate 398 and glutamate 405.

This sequence belongs to the class-II aminoacyl-tRNA synthetase family. Homodimer. The cofactor is Mg(2+).

The protein resides in the cytoplasm. It carries out the reaction tRNA(Lys) + L-lysine + ATP = L-lysyl-tRNA(Lys) + AMP + diphosphate. The chain is Lysine--tRNA ligase from Thermosipho africanus (strain TCF52B).